The sequence spans 353 residues: Guanine nucleotide-binding protein subunit alpha (353 aa).

Gly2 is lipidated: N-myristoyl glycine. Cys3 carries S-palmitoyl cysteine lipidation. The G-alpha domain occupies 32–353 (NEIKMLLLGA…QENLRLCGLI (322 aa)). Residues 35 to 48 (KMLLLGAGESGKST) form a G1 motif region. The GTP site is built by Glu43, Ser44, Gly45, Lys46, Ser47, Thr48, Asp150, Leu175, Thr181, Gly203, Asn269, Lys270, Asp272, and Ala325. Residue Ser47 coordinates Mg(2+). The interval 173-181 (DVLRSRVKT) is G2 motif. Thr181 contributes to the Mg(2+) binding site. Residues 196-205 (YRMFDVGGQR) form a G3 motif region. The interval 265–272 (ILFLNKID) is G4 motif. The tract at residues 323–328 (TCATDT) is G5 motif.

This sequence belongs to the G-alpha family. G(q) subfamily. As to quaternary structure, g proteins are composed of 3 units; alpha, beta and gamma. The alpha chain contains the guanine nucleotide binding site. Mg(2+) is required as a cofactor.

Its function is as follows. Guanine nucleotide-binding proteins (G proteins) are involved as modulators or transducers in various transmembrane signaling systems. Involved in the mating pathway. The sequence is that of Guanine nucleotide-binding protein subunit alpha (CGA1) from Cochliobolus heterostrophus (strain C4 / ATCC 48331 / race T) (Southern corn leaf blight fungus).